Reading from the N-terminus, the 124-residue chain is ATP synthase epsilon chain (124 aa).

The segment at 97–124 (ARVREASSEEEKSRAESELRAVKRSKEK) is disordered.

It belongs to the ATPase epsilon chain family. In terms of assembly, F-type ATPases have 2 components, CF(1) - the catalytic core - and CF(0) - the membrane proton channel. CF(1) has five subunits: alpha(3), beta(3), gamma(1), delta(1), epsilon(1). CF(0) has three main subunits: a, b and c.

Its subcellular location is the cell membrane. Produces ATP from ADP in the presence of a proton gradient across the membrane. In Corynebacterium urealyticum (strain ATCC 43042 / DSM 7109), this protein is ATP synthase epsilon chain.